We begin with the raw amino-acid sequence, 201 residues long: Regulator of G-protein signaling 1 (201 aa).

Residues 75–191 (SLEKLLVSEE…LKSEIFFRLA (117 aa)) enclose the RGS domain.

It is found in the cell membrane. The protein localises to the cytoplasm. The protein resides in the cytosol. Functionally, regulates G protein-coupled receptor signaling cascades, including signaling downstream of the N-formylpeptide chemoattractant receptors and leukotriene receptors. Inhibits B cell chemotaxis. Inhibits signal transduction by increasing the GTPase activity of G protein alpha subunits, thereby driving them into their inactive GDP-bound form. The protein is Regulator of G-protein signaling 1 (rgs1) of Xenopus laevis (African clawed frog).